The primary structure comprises 1148 residues: Envelopment polyprotein (1148 aa).

Positions 1–23 (MGELSPVCLYLLLQGLLLCNTGA) are cleaved as a signal peptide. Residues 24 to 495 (ARNLNELKME…VPGLHGWATM (472 aa)) are Lumenal-facing. Disulfide bonds link cysteine 34-cysteine 159, cysteine 68-cysteine 165, cysteine 117-cysteine 136, cysteine 141-cysteine 146, cysteine 183-cysteine 193, and cysteine 218-cysteine 257. A glycan (N-linked (GlcNAc...) asparagine; by host) is linked at asparagine 142. Residue asparagine 357 is glycosylated (N-linked (GlcNAc...) asparagine; by host). Cystine bridges form between cysteine 386/cysteine 445, cysteine 390/cysteine 399, cysteine 415/cysteine 434, and cysteine 462/cysteine 485. An N-linked (GlcNAc...) asparagine; by host glycan is attached at asparagine 409. The helical transmembrane segment at 496-516 (LLLLTLCFGWVLIPTITMILL) threads the bilayer. The Cytoplasmic portion of the chain corresponds to 517-637 (KILIAFAYLC…LSLFRYRSRF (121 aa)). Residues 526–543 (CSKYNTDSKFRILIEKVK) are binding to the ribonucleoprotein. 2 consecutive CCHC-type zinc fingers follow at residues 555 to 575 (CEVC…RKSC) and 580 to 601 (CPYC…FKVC). 3 binding to the ribonucleoprotein regions span residues 598–615 (FKVC…RKSL), 602–613 (KLTSRFQENLRK), and 621–635 (MQGC…RYRS). One can recognise an ITAM domain in the interval 621–644 (MQGCYRTLSLFRYRSRFFVGLVWC). A YxxL motif is present at residues 625-628 (YRTL). The chain crosses the membrane as a helical span at residues 638-658 (FVGLVWCVLLVLELIVWAASA). Residues 659-1114 (ETQNLNAGWT…EWILGVLNGN (456 aa)) lie on the Lumenal side of the membrane. 8 disulfides stabilise this stretch: cysteine 745–cysteine 780, cysteine 749–cysteine 787, cysteine 761–cysteine 894, cysteine 775–cysteine 905, cysteine 790–cysteine 913, cysteine 816–cysteine 825, cysteine 833–cysteine 842, and cysteine 873–cysteine 877. Residues 767-787 (YEYETGWGCNPPDCPGVGTGC) are fusion loop. An N-linked (GlcNAc...) asparagine; by host glycan is attached at asparagine 937. Disulfide bonds link cysteine 979–cysteine 1009, cysteine 1002–cysteine 1054, cysteine 1019–cysteine 1024, cysteine 1055–cysteine 1060, and cysteine 1094–cysteine 1098. The helical transmembrane segment at 1115–1135 (WMVVAVLVVLLILSILLFTLC) threads the bilayer. Binding to the ribonucleoprotein stretches follow at residues 1131–1143 (LFTL…PSYR) and 1131–1148 (LFTL…EHKP). Residues 1136–1148 (CPRRPSYRKEHKP) lie on the Cytoplasmic side of the membrane.

The protein belongs to the hantavirus envelope glycoprotein family. In terms of assembly, homodimer. Homotetramer; forms heterotetrameric Gn-Gc spikes in the pre-fusion conformation. Interacts (via C-terminus) with the nucleoprotein. Interacts with host TUFM; this interaction contributes to the virus-induced degradation of mitochondria by autophagy, which leads to degradation of host MAVS and inhibition of type I interferon (IFN) responses. Interacts with host MAP1LC3B; this interaction contributes to the virus-induced degradation of mitochondria by autophagy, which leads to degradation of host MAVS and inhibition of type I interferon (IFN) responses. As to quaternary structure, homodimer. Homotetramer; forms heterotetrameric Gn-Gc spikes in the pre-fusion conformation. Homotrimer; forms homotrimer in the post-fusion conformation at acidic pH. Interacts (via C-terminus) with the nucleoprotein. In terms of processing, envelope polyprotein precursor is quickly cleaved in vivo just after synthesis, presumably by host signal peptidase.

It localises to the virion membrane. It is found in the host cell surface. The protein resides in the host Golgi apparatus membrane. The protein localises to the host endoplasmic reticulum membrane. Its subcellular location is the host mitochondrion. In terms of biological role, forms homotetramers with glycoprotein C at the surface of the virion. Attaches the virion to host cell receptors including integrin ITGAV/ITGB3. This attachment induces virion internalization predominantly through clathrin-dependent endocytosis. Mediates the assembly and budding of infectious virus particles through its interaction with the nucleocapsid protein and the viral genome. May dysregulate normal immune and endothelial cell responses through an ITAM motif. Translocates to mitochondria, binds to host TUFM and recruits MAP1LC3B. These interactions induce mitochondrial autophagy and therefore destruction of host MAVS leading to inhibition of type I interferon (IFN) responses. Concomitant breakdown of glycoprotein N is apparently prevented by the nucleoprotein that may inhibit Gn-stimulated autophagosome-lysosome fusion. Interacts with the viral genomic RNA. Forms homotetramers with glycoprotein N at the surface of the virion. Attaches the virion to host cell receptors including integrin ITGAV/ITGB3. This attachment induces virion internalization predominantly through clathrin-dependent endocytosis. Class II fusion protein that promotes fusion of viral membrane with host endosomal membrane after endocytosis of the virion. The sequence is that of Envelopment polyprotein (GP) from Puumala virus (strain K27).